Reading from the N-terminus, the 93-residue chain is Co-chaperonin GroES (93 aa).

It belongs to the GroES chaperonin family. In terms of assembly, heptamer of 7 subunits arranged in a ring. Interacts with the chaperonin GroEL.

The protein resides in the cytoplasm. In terms of biological role, together with the chaperonin GroEL, plays an essential role in assisting protein folding. The GroEL-GroES system forms a nano-cage that allows encapsulation of the non-native substrate proteins and provides a physical environment optimized to promote and accelerate protein folding. GroES binds to the apical surface of the GroEL ring, thereby capping the opening of the GroEL channel. This is Co-chaperonin GroES from Streptococcus sanguinis.